Consider the following 210-residue polypeptide: Thymidylate kinase (210 aa).

Gly10–Ser17 provides a ligand contact to ATP.

It belongs to the thymidylate kinase family.

The catalysed reaction is dTMP + ATP = dTDP + ADP. Functionally, phosphorylation of dTMP to form dTDP in both de novo and salvage pathways of dTTP synthesis. The polypeptide is Thymidylate kinase (Pseudomonas fluorescens (strain SBW25)).